The following is a 338-amino-acid chain: D-erythrose-4-phosphate dehydrogenase (338 aa).

12-13 contributes to the NAD(+) binding site; the sequence is RI. Substrate contacts are provided by residues 154–156, Arg-200, 213–214, and Arg-236; these read SCT and TK. Residue Cys-155 is the Nucleophile of the active site. An NAD(+)-binding site is contributed by Asn-318.

The protein belongs to the glyceraldehyde-3-phosphate dehydrogenase family. Epd subfamily. In terms of assembly, homotetramer.

The protein resides in the cytoplasm. The catalysed reaction is D-erythrose 4-phosphate + NAD(+) + H2O = 4-phospho-D-erythronate + NADH + 2 H(+). The protein operates within cofactor biosynthesis; pyridoxine 5'-phosphate biosynthesis; pyridoxine 5'-phosphate from D-erythrose 4-phosphate: step 1/5. Its function is as follows. Catalyzes the NAD-dependent conversion of D-erythrose 4-phosphate to 4-phosphoerythronate. The chain is D-erythrose-4-phosphate dehydrogenase from Pectobacterium carotovorum subsp. carotovorum (strain PC1).